A 485-amino-acid chain; its full sequence is MPIFQREGHLKYSFAAGEYQAGNYDSASPRFGQLDLIYGLPWGMTAYGGVLISNNYNAFTLGIGKNFGYIGAISIDVTQAKSELNNDRDSQGQSYRFLYSKSFESGTDFRLAGYRYSTSGFYTFQEATDVRSDADSDYNRYHKRSEIQGNLTQQLGAYGSVYLNLTQQDYWNDAGKQNTVSAGYNGRIGKVSYSIAYSWNKSPEWDESDRLWSFNISVPLGRAWSNYRVTTDQDGRTNQQVGVSGTLLEDRNLSYSVQEGYASNGVGNSGNANVGYQGGSGNVNVGYSYGKDYRQLNYSVRGGVIVHSEGVTLSQPLGETMTLISVPGARNARVVNNGGVQVDWMGNAIVPYAMPYRENEISLRSDSLGDDVDVENAFQKVVPTRGAIVRARFDTRVGYRVLMTLLRSAGSPVPFGATATLITDKQNEVSSIVGEEGQLYISGMPEEGRVLIKWGNDASQQCVAPYKLSLELKQGGIIPVSANCQ.

The protein belongs to the fimbrial export usher family.

It is found in the cell outer membrane. Functionally, part of the lpfABCC'DE fimbrial operon. LP fimbriae may participate in the interaction with eukaryotic cells by assisting in microcolony formation. Could be involved in the export and assembly of the fimbrial subunits across the outer membrane. This Escherichia coli O157:H7 protein is Probable outer membrane usher protein LpfC' (lpfC').